A 391-amino-acid polypeptide reads, in one-letter code: Phosphoglycerate kinase (391 aa).

Substrate contacts are provided by residues 21–23, arginine 41, 64–67, arginine 121, and arginine 154; these read DFN and HLGR. ATP-binding positions include lysine 205, glutamate 322, and 348 to 351; that span reads GGDS.

This sequence belongs to the phosphoglycerate kinase family. In terms of assembly, monomer.

It is found in the cytoplasm. The enzyme catalyses (2R)-3-phosphoglycerate + ATP = (2R)-3-phospho-glyceroyl phosphate + ADP. Its pathway is carbohydrate degradation; glycolysis; pyruvate from D-glyceraldehyde 3-phosphate: step 2/5. The chain is Phosphoglycerate kinase from Solibacter usitatus (strain Ellin6076).